A 96-amino-acid polypeptide reads, in one-letter code: Protein RnfH (96 aa).

The protein belongs to the UPF0125 (RnfH) family.

The chain is Protein RnfH from Escherichia coli O127:H6 (strain E2348/69 / EPEC).